The chain runs to 476 residues: Aspartyl/glutamyl-tRNA(Asn/Gln) amidotransferase subunit B (476 aa).

Belongs to the GatB/GatE family. GatB subfamily. As to quaternary structure, heterotrimer of A, B and C subunits.

The catalysed reaction is L-glutamyl-tRNA(Gln) + L-glutamine + ATP + H2O = L-glutaminyl-tRNA(Gln) + L-glutamate + ADP + phosphate + H(+). The enzyme catalyses L-aspartyl-tRNA(Asn) + L-glutamine + ATP + H2O = L-asparaginyl-tRNA(Asn) + L-glutamate + ADP + phosphate + 2 H(+). In terms of biological role, allows the formation of correctly charged Asn-tRNA(Asn) or Gln-tRNA(Gln) through the transamidation of misacylated Asp-tRNA(Asn) or Glu-tRNA(Gln) in organisms which lack either or both of asparaginyl-tRNA or glutaminyl-tRNA synthetases. The reaction takes place in the presence of glutamine and ATP through an activated phospho-Asp-tRNA(Asn) or phospho-Glu-tRNA(Gln). The polypeptide is Aspartyl/glutamyl-tRNA(Asn/Gln) amidotransferase subunit B (Laribacter hongkongensis (strain HLHK9)).